Reading from the N-terminus, the 285-residue chain is Pantothenate synthetase (285 aa).

30 to 37 is an ATP binding site; the sequence is MGFLHEGH. Residue His37 is the Proton donor of the active site. Position 61 (Gln61) interacts with (R)-pantoate. Gln61 serves as a coordination point for beta-alanine. 148–151 is an ATP binding site; it reads GKKD. Gln154 is a binding site for (R)-pantoate. ATP contacts are provided by residues Val177 and 185–188; that span reads LSSR.

Belongs to the pantothenate synthetase family. In terms of assembly, homodimer.

Its subcellular location is the cytoplasm. It catalyses the reaction (R)-pantoate + beta-alanine + ATP = (R)-pantothenate + AMP + diphosphate + H(+). The protein operates within cofactor biosynthesis; (R)-pantothenate biosynthesis; (R)-pantothenate from (R)-pantoate and beta-alanine: step 1/1. Functionally, catalyzes the condensation of pantoate with beta-alanine in an ATP-dependent reaction via a pantoyl-adenylate intermediate. The chain is Pantothenate synthetase from Leptospira interrogans serogroup Icterohaemorrhagiae serovar copenhageni (strain Fiocruz L1-130).